Consider the following 376-residue polypeptide: DnaJ homolog subfamily B member 12 (376 aa).

N-acetylmethionine is present on Met-1. A disordered region spans residues 45–97 (ALIESLNQKPQSTGDHPQPTDTTHTTTKKAGGTETPSANGEAGGGESAKGYTS). Positions 57-84 (TGDHPQPTDTTHTTTKKAGGTETPSANG) are enriched in low complexity. The region spanning 111–175 (DYYEILGVSR…EKRKQYDQFG (65 aa)) is the J domain. His-186 carries the pros-methylhistidine modification. The chain crosses the membrane as a helical span at residues 243 to 263 (GGLGVFVQLMPILILILVSAL).

The protein belongs to the DnaJ family. DNAJB12/DNAJB14 subfamily. In terms of assembly, homodimer and homotetramer. Interacts (via J domain) with HSPA8/Hsc70. Forms a multiprotein complex, at least composed of DNAJB12, DNAJB14, HSPA8/Hsc70 and SGTA; interaction with DNAJB14 and HSPA8/Hsc70 is direct. Methylated at His-186 by METTL9.

The protein localises to the endoplasmic reticulum membrane. The protein resides in the nucleus membrane. In terms of biological role, acts as a co-chaperone with HSPA8/Hsc70; required to promote protein folding and trafficking, prevent aggregation of client proteins, and promote unfolded proteins to endoplasmic reticulum-associated degradation (ERAD) pathway. Acts by determining HSPA8/Hsc70's ATPase and polypeptide-binding activities. Can also act independently of HSPA8/Hsc70: together with DNAJB14, acts as a chaperone that promotes maturation of potassium channels KCND2 and KCNH2 by stabilizing nascent channel subunits and assembling them into tetramers. While stabilization of nascent channel proteins is dependent on HSPA8/Hsc70, the process of oligomerization of channel subunits is independent of HSPA8/Hsc70. When overexpressed, forms membranous structures together with DNAJB14 and HSPA8/Hsc70 within the nucleus; the role of these structures, named DJANGOs, is still unclear. This Mus musculus (Mouse) protein is DnaJ homolog subfamily B member 12.